A 712-amino-acid polypeptide reads, in one-letter code: Small ribosomal subunit protein uS3c (712 aa).

Residues 1-118 (MGQKVHPLGF…IKVSKDLVTN (118 aa)) form an S3-like 1st part region. Positions 119–580 (LQKTRKYLFK…LQTAFLTQIE (462 aa)) are intervening sequence (IVS). The interval 581 to 712 (SQRKMYKANL…VWIFKGYSKI (132 aa)) is S3-like 2nd part.

Belongs to the universal ribosomal protein uS3 family. In terms of assembly, part of the 30S ribosomal subunit.

The protein resides in the plastid. The protein localises to the chloroplast. This is Small ribosomal subunit protein uS3c (rps3) from Chlamydomonas reinhardtii (Chlamydomonas smithii).